The following is a 204-amino-acid chain: Pro-hevein (204 aa).

The N-terminal stretch at M1–A17 is a signal peptide. Positions E18–D60 constitute a Chitin-binding type-1 domain. 4 disulfides stabilise this stretch: C20–C35, C29–C41, C34–C48, and C54–C58. The propeptide occupies S61 to G66. The Barwin domain occupies G68–D189. Disulfide bonds link C96–C128, C117–C151, and C131–C187.

Post-translationally, proteolytically processed to yield the two chains of the mature protein. In terms of tissue distribution, laticifer.

N-acetyl-D-glucosamine / N-acetyl-D-neuraminic acid binding lectin. Can inhibit fungal growth. The sequence is that of Pro-hevein (HEV1) from Hevea brasiliensis (Para rubber tree).